The chain runs to 1121 residues: uncharacterized protein (1121 aa).

Residues 179–198 form a disordered region; the sequence is GPGECQSVHNQSSGSGSNSY. N188, N325, N351, N449, N561, and N615 each carry an N-linked (GlcNAc...) asparagine; by host glycan. Disordered regions lie at residues 649–684 and 701–734; these read KRIH…RIHN and STRQ…TDSD. Polar residues predominate over residues 701–715; the sequence is STRQDASGGSSSGTK. N-linked (GlcNAc...) asparagine; by host glycosylation is found at N838, N911, N914, and N980.

Belongs to the herpesviridae US22 family.

This is an uncharacterized protein from Homo sapiens (Human).